A 192-amino-acid chain; its full sequence is Thymidine kinase (192 aa).

ATP is bound by residues 9-16 (SSMNAGKS) and 87-90 (DEAQ). Glutamate 88 acts as the Proton acceptor in catalysis. 4 residues coordinate Zn(2+): cysteine 145, cysteine 147, cysteine 182, and histidine 185.

The protein belongs to the thymidine kinase family. Homotetramer.

The protein resides in the cytoplasm. The catalysed reaction is thymidine + ATP = dTMP + ADP + H(+). The sequence is that of Thymidine kinase from Colwellia psychrerythraea (strain 34H / ATCC BAA-681) (Vibrio psychroerythus).